We begin with the raw amino-acid sequence, 166 residues long: Lutropin subunit beta (166 aa).

An N-terminal signal peptide occupies residues 1 to 21; the sequence is MGGAQVLLLLTLLGTPLVTHG. Disulfide bonds link Cys56-Cys104, Cys70-Cys119, Cys73-Cys157, Cys81-Cys135, Cys85-Cys137, and Cys140-Cys147. Asn60 carries N-linked (GlcNAc...) asparagine glycosylation.

It belongs to the glycoprotein hormones subunit beta family. In terms of assembly, heterodimer of a common alpha chain and a unique beta chain which confers biological specificity to thyrotropin, lutropin, follitropin and gonadotropin.

It localises to the secreted. Promotes spermatogenesis and ovulation by stimulating the testes and ovaries to synthesize steroids. This Coturnix japonica (Japanese quail) protein is Lutropin subunit beta (LHB).